The primary structure comprises 413 residues: Serine hydroxymethyltransferase (413 aa).

Residues L115 and 119–121 (GHL) contribute to the (6S)-5,6,7,8-tetrahydrofolate site. K224 is modified (N6-(pyridoxal phosphate)lysine).

It belongs to the SHMT family. Homodimer. Pyridoxal 5'-phosphate serves as cofactor.

It is found in the cytoplasm. The catalysed reaction is (6R)-5,10-methylene-5,6,7,8-tetrahydrofolate + glycine + H2O = (6S)-5,6,7,8-tetrahydrofolate + L-serine. The protein operates within one-carbon metabolism; tetrahydrofolate interconversion. It participates in amino-acid biosynthesis; glycine biosynthesis; glycine from L-serine: step 1/1. Catalyzes the reversible interconversion of serine and glycine with tetrahydrofolate (THF) serving as the one-carbon carrier. This reaction serves as the major source of one-carbon groups required for the biosynthesis of purines, thymidylate, methionine, and other important biomolecules. Also exhibits THF-independent aldolase activity toward beta-hydroxyamino acids, producing glycine and aldehydes, via a retro-aldol mechanism. The polypeptide is Serine hydroxymethyltransferase (Mycoplasma capricolum subsp. capricolum (strain California kid / ATCC 27343 / NCTC 10154)).